Consider the following 288-residue polypeptide: Glycine--tRNA ligase alpha subunit (288 aa).

The protein belongs to the class-II aminoacyl-tRNA synthetase family. As to quaternary structure, tetramer of two alpha and two beta subunits.

The protein localises to the cytoplasm. It catalyses the reaction tRNA(Gly) + glycine + ATP = glycyl-tRNA(Gly) + AMP + diphosphate. This Rickettsia peacockii (strain Rustic) protein is Glycine--tRNA ligase alpha subunit.